The sequence spans 628 residues: ATP-dependent zinc metalloprotease FtsH 4 (628 aa).

Residues 1–14 (MAIKPQPQWQRRLA) are Cytoplasmic-facing. Residues 15 to 35 (SVLLWGSTIYLLVNLLAPALF) traverse the membrane as a helical segment. The Lumenal portion of the chain corresponds to 36 to 119 (RSQPPQVPYS…AAAPPAKNSW (84 aa)). The chain crosses the membrane as a helical span at residues 120–140 (FGTLLSWVIPPLIFVGIWSFF). Residues 141-628 (LNRNNNGAPG…QVQAPGTLVV (488 aa)) are Cytoplasmic-facing. 214–221 (GPPGTGKT) serves as a coordination point for ATP. H438 is a Zn(2+) binding site. The active site involves E439. Zn(2+) contacts are provided by H442 and D515.

It in the central section; belongs to the AAA ATPase family. The protein in the C-terminal section; belongs to the peptidase M41 family. In terms of assembly, homohexamer. Requires Zn(2+) as cofactor.

It localises to the cellular thylakoid membrane. Functionally, acts as a processive, ATP-dependent zinc metallopeptidase for both cytoplasmic and membrane proteins. Plays a role in the quality control of integral membrane proteins. The protein is ATP-dependent zinc metalloprotease FtsH 4 of Synechocystis sp. (strain ATCC 27184 / PCC 6803 / Kazusa).